Here is a 165-residue protein sequence, read N- to C-terminus: Nucleotide-binding protein Ctha_0558 (165 aa).

The protein belongs to the YajQ family.

Nucleotide-binding protein. In Chloroherpeton thalassium (strain ATCC 35110 / GB-78), this protein is Nucleotide-binding protein Ctha_0558.